The sequence spans 156 residues: RING finger protein 224 (156 aa).

An RING-type zinc finger spans residues 23 to 70; it reads CIICYSAYDLSVHLPRRLYCGHTFCQACMQRLDMPAHEQHWIPCPQCR.

In Mus musculus (Mouse), this protein is RING finger protein 224 (Rnf224).